The following is a 264-amino-acid chain: MKAVVLAVAVLFLTGSQARHFWQQDDPQTSWDRVKDFATVYVDAIKDSGRDYVSQFESSALGQQLNLKLVDNWDTVGTTVGRLQEQLGPVTQEFWSNLEKDTDWLREEMNKDLEEVKKQVQPYLDQFQTKWQEEMEHYRQKVGPLGAELREGARQKLQDLQERLVPVGEDIRDRMRTHVDALRSNLSPYSDKMRERLAQHLAKLKDSTTLAEYRTKASNHLQTLSEKAKPALEDLRQGLTPMLESFRATIMGWIDETSKRLSTQ.

An N-terminal signal peptide occupies residues M1–A18. 2 repeat units span residues L67 to G88 and P89 to N110. A 10 X approximate tandem repeats region spans residues L67–Q264. Position 109 is a methionine sulfoxide (M109). The 3; half-length repeat unit spans residues K111–Q121. Repeat copies occupy residues P122 to G143, P144 to V165, and P166 to S187. The 7; truncated repeat unit spans residues P188–S207. Residue M193 is modified to Methionine sulfoxide. Repeat unit 8 spans residues T208–K229. The stretch at P230–T240 is one 9; half-length repeat. Repeat unit 10 spans residues P241–Q264. At M242 the chain carries Methionine sulfoxide.

Belongs to the apolipoprotein A1/A4/E family. In terms of assembly, homodimer. Interacts with APOA1BP and CLU. Component of a sperm activating protein complex (SPAP), consisting of APOA1, an immunoglobulin heavy chain, an immunoglobulin light chain and albumin. Interacts with NDRG1. Interacts with SCGB3A2. Interacts with NAXE and YJEFN3. Glycosylated. In terms of processing, palmitoylated. Post-translationally, phosphorylation sites are present in the extracellular medium.

Its subcellular location is the secreted. Functionally, participates in the reverse transport of cholesterol from tissues to the liver for excretion by promoting cholesterol efflux from tissues and by acting as a cofactor for the lecithin cholesterol acyltransferase (LCAT). As part of the SPAP complex, activates spermatozoa motility. The sequence is that of Apolipoprotein A-I (Apoa1) from Peromyscus maniculatus bairdii (Prairie deer mouse).